Here is a 71-residue protein sequence, read N- to C-terminus: Large ribosomal subunit protein uL30 (71 aa).

This sequence belongs to the universal ribosomal protein uL30 family. In terms of assembly, part of the 50S ribosomal subunit.

In Mycolicibacterium paratuberculosis (strain ATCC BAA-968 / K-10) (Mycobacterium paratuberculosis), this protein is Large ribosomal subunit protein uL30.